Here is an 88-residue protein sequence, read N- to C-terminus: Cell division topological specificity factor (88 aa).

It belongs to the MinE family.

In terms of biological role, prevents the cell division inhibition by proteins MinC and MinD at internal division sites while permitting inhibition at polar sites. This ensures cell division at the proper site by restricting the formation of a division septum at the midpoint of the long axis of the cell. This is Cell division topological specificity factor from Citrobacter koseri (strain ATCC BAA-895 / CDC 4225-83 / SGSC4696).